A 235-amino-acid polypeptide reads, in one-letter code: Probable transcriptional regulatory protein CFF8240_0424 (235 aa).

Belongs to the TACO1 family.

It localises to the cytoplasm. The sequence is that of Probable transcriptional regulatory protein CFF8240_0424 from Campylobacter fetus subsp. fetus (strain 82-40).